A 162-amino-acid polypeptide reads, in one-letter code: Lipoprotein signal peptidase (162 aa).

3 helical membrane passes run 12 to 32 (WLWL…LILQ), 70 to 90 (WFFA…MYRS), and 102 to 122 (ALII…GFVV). Active-site residues include Asp-123 and Asp-141. The helical transmembrane segment at 137–157 (FNLADSAICIGAALIVLEGFL) threads the bilayer.

The protein belongs to the peptidase A8 family.

It localises to the cell inner membrane. The enzyme catalyses Release of signal peptides from bacterial membrane prolipoproteins. Hydrolyzes -Xaa-Yaa-Zaa-|-(S,diacylglyceryl)Cys-, in which Xaa is hydrophobic (preferably Leu), and Yaa (Ala or Ser) and Zaa (Gly or Ala) have small, neutral side chains.. Its pathway is protein modification; lipoprotein biosynthesis (signal peptide cleavage). Functionally, this protein specifically catalyzes the removal of signal peptides from prolipoproteins. The protein is Lipoprotein signal peptidase of Citrobacter koseri (strain ATCC BAA-895 / CDC 4225-83 / SGSC4696).